Here is a 1479-residue protein sequence, read N- to C-terminus: WASH complex subunit 2 (1479 aa).

Residues 1-17 (MPEEQPQQQQQPVREQP) show a composition bias toward low complexity. Disordered regions lie at residues 1-25 (MPEEQPQQQQQPVREQPSNPDDVPW), 188-210 (GGLVEGGEQAGTDAQPSANTEKK), 240-564 (FIED…GGVK), 576-1383 (FSGK…FDDI), and 1419-1479 (TSTT…NLFD). Positions 242–279 (EDSDSDSSDEEDEEDVDAEDGSDESSSESSSDDDDEKD) are enriched in acidic residues. A compositionally biased stretch (low complexity) spans 334 to 349 (SKKSSNSYTSSLSDIL). Acidic residues predominate over residues 422-431 (DDDLFGDSEE). Composition is skewed to low complexity over residues 465 to 475 (TTTSSQPQQKK) and 514 to 532 (TPKPKSTTTSAAPTATTTK). Phosphothreonine is present on Thr535. The span at 542–552 (ASGSESTTGKS) shows a compositional bias: polar residues. A compositionally biased stretch (basic and acidic residues) spans 595-620 (TESKASEDDFFSSDKKSTSATKKDAE). Positions 709–723 (PKAPTTATTTTTTKP) are enriched in low complexity. Positions 765–781 (TETKKQPITEEPKKKQD) are enriched in basic and acidic residues. Positions 802 to 814 (ASISPASPVSTIE) are enriched in polar residues. Residues 839-885 (DLTKDEPAKSEPTKVEPTKVEPTKAEPTKVEPAKVEPTKVESDKKES) are compositionally biased toward basic and acidic residues. The segment covering 904–916 (KNPTTSSSTTATE) has biased composition (polar residues). Over residues 951–968 (SSTTKKSTTTTTTTTSSK) the composition is skewed to low complexity. A compositionally biased stretch (basic and acidic residues) spans 981-990 (KKVEEKKSSD). 2 stretches are compositionally biased toward low complexity: residues 991-1000 (FDSFFSGSDD) and 1010-1021 (KTTTTPPLTSTT). A compositionally biased stretch (polar residues) spans 1062 to 1075 (PLTSNNTKNRTKSI). The segment covering 1091-1107 (EKNRSESPTSEKAEPTK) has biased composition (basic and acidic residues). Over residues 1108–1123 (KTSNISSLQNKLSLNP) the composition is skewed to polar residues. Residues 1147–1162 (STNNDNDSSATDLSDS) are compositionally biased toward low complexity. Composition is skewed to polar residues over residues 1163-1174 (GRSSPSVTSPTL) and 1220-1236 (KSGTSAPNRSESPTPTQ). A Phosphoserine modification is found at Ser1249. Low complexity predominate over residues 1277 to 1292 (EKTSSGKSSPSPTIKS). The span at 1307 to 1317 (ASTTTKPTASE) shows a compositional bias: polar residues. Residues 1327–1358 (KKSEPETPKETPKETPKEKEQTKEKEQPKETP) are compositionally biased toward basic and acidic residues. 2 stretches are compositionally biased toward low complexity: residues 1419-1445 (TSTTSKSTTTTTTTTTTKAKSTKAVDN) and 1452-1466 (NTTTKATPTKATPSK).

Belongs to the FAM21 family. As to quaternary structure, probable component of the WASH complex.

The chain is WASH complex subunit 2 from Dictyostelium discoideum (Social amoeba).